The primary structure comprises 467 residues: Cysteine--tRNA ligase (467 aa).

C27 contributes to the Zn(2+) binding site. A 'HIGH' region motif is present at residues 29–39 (ATVQGLPHIGH). 3 residues coordinate Zn(2+): C209, H234, and E238. A 'KMSKS' region motif is present at residues 265 to 269 (KMSKS). An ATP-binding site is contributed by K268.

Belongs to the class-I aminoacyl-tRNA synthetase family. As to quaternary structure, monomer. Zn(2+) is required as a cofactor.

It is found in the cytoplasm. It carries out the reaction tRNA(Cys) + L-cysteine + ATP = L-cysteinyl-tRNA(Cys) + AMP + diphosphate. This is Cysteine--tRNA ligase from Mycolicibacterium gilvum (strain PYR-GCK) (Mycobacterium gilvum (strain PYR-GCK)).